The sequence spans 356 residues: Guanine nucleotide-binding protein alpha-3 subunit (356 aa).

The segment at 1 to 26 is disordered; it reads MGACMSKNDEETEQKKRSQKIDRDLE. The N-myristoyl glycine moiety is linked to residue Gly-2. Cys-4 carries the S-palmitoyl cysteine lipid modification. Residues 7-23 are compositionally biased toward basic and acidic residues; it reads KNDEETEQKKRSQKIDR. Residues 34 to 356 enclose the G-alpha domain; sequence KECKILLLGS…NNALKDSGIL (323 aa). The G1 motif stretch occupies residues 37–50; it reads KILLLGSGESGKST. GTP is bound by residues 42–49, 179–185, 204–208, 273–276, and Ala-328; these read GSGESGKS, LRARTKT, DVGGQ, and NKVD. Mg(2+) is bound by residues Ser-49 and Thr-185. Residues 177 to 185 form a G2 motif region; it reads DVLRARTKT. Residues 200–209 form a G3 motif region; it reads IHMFDVGGQR. The segment at 269–276 is G4 motif; sequence ILFLNKVD. Residues 326–331 are G5 motif; sequence TQATDT.

The protein belongs to the G-alpha family. G(q) subfamily. G proteins are composed of 3 units; alpha, beta and gamma. The alpha chain contains the guanine nucleotide binding site.

Its function is as follows. Guanine nucleotide-binding proteins (G proteins) are involved as modulators or transducers in various transmembrane signaling systems. Involved in conidiation. This Neurospora crassa (strain ATCC 24698 / 74-OR23-1A / CBS 708.71 / DSM 1257 / FGSC 987) protein is Guanine nucleotide-binding protein alpha-3 subunit (gna-3).